The following is a 118-amino-acid chain: cAMP-responsive element-binding protein-like 2 (118 aa).

The disordered stretch occupies residues 1 to 25 (MDDSKVSGGKVKKPGKRGRKPAKID). A compositionally biased stretch (basic residues) spans 10 to 21 (KVKKPGKRGRKP). Positions 23-86 (KIDLKAKLER…AAMDQGKIPS (64 aa)) constitute a bZIP domain. The basic motif stretch occupies residues 29–60 (KLERSRQSARECRARKKLRYQYLEELVSSRER). The segment at 62–69 (ICALREEL) is leucine-zipper.

It belongs to the bZIP family. ATF subfamily.

It is found in the nucleus. In terms of biological role, probable regulator of creb1 transcriptional activity which is involved in adipose cells differentiation. May also play a regulatory role in the cell cycle. This is cAMP-responsive element-binding protein-like 2 (crebl2) from Xenopus tropicalis (Western clawed frog).